A 316-amino-acid chain; its full sequence is Thymidylate synthase (316 aa).

Residues R23 and 178–179 (RR) contribute to the dUMP site. C198 functions as the Nucleophile in the catalytic mechanism. Residues 218 to 221 (RSGD), N229, and 259 to 261 (HIY) contribute to the dUMP site. D221 contacts (6R)-5,10-methylene-5,6,7,8-tetrahydrofolate. Residue A315 coordinates (6R)-5,10-methylene-5,6,7,8-tetrahydrofolate.

The protein belongs to the thymidylate synthase family. Bacterial-type ThyA subfamily. As to quaternary structure, homodimer.

The protein resides in the cytoplasm. It catalyses the reaction dUMP + (6R)-5,10-methylene-5,6,7,8-tetrahydrofolate = 7,8-dihydrofolate + dTMP. It participates in pyrimidine metabolism; dTTP biosynthesis. Catalyzes the reductive methylation of 2'-deoxyuridine-5'-monophosphate (dUMP) to 2'-deoxythymidine-5'-monophosphate (dTMP) while utilizing 5,10-methylenetetrahydrofolate (mTHF) as the methyl donor and reductant in the reaction, yielding dihydrofolate (DHF) as a by-product. This enzymatic reaction provides an intracellular de novo source of dTMP, an essential precursor for DNA biosynthesis. In Latilactobacillus sakei subsp. sakei (strain 23K) (Lactobacillus sakei subsp. sakei), this protein is Thymidylate synthase.